The primary structure comprises 633 residues: MADSLDHAPAQANNLPQFLALTIGSIGVVYGDIGTSPLYAFREALRPFGPGGVGRDEVIGLVSLVLWTLTAIVTIKYVLFLLRADNDGEGGTLSLLALLLKKGTKYPVLMFFAGVLGAALFIGDAMITPALSVLSAVEGLKLVAPALHDYVLPISVVIILLLFAVQSRGTGAVSVFFGPITLVWFLVMAAAGVAHIGDDLAILSAFNPLNAIGFLWNAGLIGFIVLGAIFLTVTGAEALYADLGHFGRHSIQAAWFAVVFPALALNYLGQGALVLSHPDAISNPFFLMFPNWALLPMVILATAGTIIASQSVITGAFSLIRQAIHLGFLPRFEICYTSETQTGQIYLPLVNTILLTGVLALMLMFGSSEALAPAYGVSITGAMVIDTILAFEFVRRQWGWPALTAIAVLLPLFSLELIFLGANLFKIHHGGYVPILIAGTLIMMMWTWRKGVSLLREKTARQDVPLDQFIATVERKSEHAPVEVPGTAIFLTATPDTTPAVLLHNIKHNHVLHQHNVIMTIKTAKVPYVPEKDRYTITKLSDRFSLLELRFGFMDDQNVSRALVRCRKEGFRFEIMSTSFYLGRRKLIADPRSGLPQWQDKLFIAMADSAIDPTEYFHLPANRVVELGEQVII.

The next 11 membrane-spanning stretches (helical) occupy residues 61–81, 107–127, 143–163, 173–193, 211–231, 255–275, 287–307, 345–365, 371–391, 402–422, and 427–447; these read LVSL…VLFL, PVLM…DAMI, VAPA…LLLF, VSVF…AAGV, AIGF…AIFL, WFAV…ALVL, LMFP…GTII, IYLP…MLMF, LAPA…ILAF, ALTA…FLGA, and IHHG…MMWT.

Belongs to the HAK/KUP transporter (TC 2.A.72) family.

It is found in the cell inner membrane. It catalyses the reaction K(+)(in) + H(+)(in) = K(+)(out) + H(+)(out). Functionally, transport of potassium into the cell. Likely operates as a K(+):H(+) symporter. The protein is Probable potassium transport system protein Kup 3 of Sinorhizobium medicae (strain WSM419) (Ensifer medicae).